Here is a 95-residue protein sequence, read N- to C-terminus: Microcin E492 immunity protein (95 aa).

The next 3 membrane-spanning stretches (helical) occupy residues 1-21, 35-55, and 67-87; these read MTLL…FCII, VIVL…TKVY, and YLFC…ILTI.

This sequence belongs to the MceB microcin immunity protein family.

The protein resides in the cell inner membrane. Its function is as follows. Protect the producing cell against microcin E492. The sequence is that of Microcin E492 immunity protein from Klebsiella pneumoniae.